The chain runs to 351 residues: Auxin-responsive protein IAA27 (351 aa).

The interval 1 to 37 is disordered; that stretch reads MMNLISFETPPLGRRSQDGGSSSSSITAATTTTNKAK. Low complexity predominate over residues 21–34; that stretch reads SSSSSITAATTTTN. The 95-residue stretch at 233–327 folds into the PB1 domain; sequence NMFAKVHMDG…SAKRLYIAKN (95 aa).

The protein belongs to the Aux/IAA family. As to quaternary structure, homodimers and heterodimers. As to expression, expressed in roots and seedlings.

The protein localises to the nucleus. In terms of biological role, aux/IAA proteins are short-lived transcriptional factors that function as repressors of early auxin response genes at low auxin concentrations. The sequence is that of Auxin-responsive protein IAA27 (IAA27) from Oryza sativa subsp. japonica (Rice).